A 479-amino-acid chain; its full sequence is MNTILAQQIAKEGGVEAWMIAQQHKSLLRFLTCGSVDDGKSTLIGRLLHDTRQIYEDQLSSLHNDSKRHGTQGEKLDLALLVDGLQAEREQGITIDVAYRYFSTEKRKFIIADTPGHEQYTRNMATGASTCDLAILLIDARKGVLDQTRRHSFISTLLGIKHLVVAINKMDLVDYREETFARIREDYLTFAERLPGDLDIRFVPLSALEGDNVAAQSANMRWYSGPTLLEVLETVDIQRVVDRQPMRFPVQYVNRPNLDFRGYVGTLASGSIKVGERIKVLPSGVESSVSRIVTFDGDREEAYAGEAITLVLNDEIDISRGDLLLAANEALAPAQYAAIDVVWMAEQPLTPGQSYDVKLAGKKTRARVETIRYQIDINNLTQRDVESLPLNGIGLVEMAFDEPLALDIYQQNPVTGGLIFIDRLSNITVGAGMVREPVERGVTPPMEYSAFELELNALVRRHFPHWNARDLLGDKHGAA.

One can recognise a tr-type G domain in the interval 25-239 (KSLLRFLTCG…EVLETVDIQR (215 aa)). A G1 region spans residues 34 to 41 (GSVDDGKS). 34-41 (GSVDDGKS) lines the GTP pocket. A G2 region spans residues 92-96 (GITID). The segment at 113 to 116 (DTPG) is G3. Residues 113 to 117 (DTPGH) and 168 to 171 (NKMD) contribute to the GTP site. The interval 168-171 (NKMD) is G4. The interval 206-208 (SAL) is G5.

The protein belongs to the TRAFAC class translation factor GTPase superfamily. Classic translation factor GTPase family. CysN/NodQ subfamily. In terms of assembly, heterodimer composed of CysD, the smaller subunit, and CysN.

It carries out the reaction sulfate + ATP + H(+) = adenosine 5'-phosphosulfate + diphosphate. The protein operates within sulfur metabolism; hydrogen sulfide biosynthesis; sulfite from sulfate: step 1/3. Its function is as follows. With CysD forms the ATP sulfurylase (ATPS) that catalyzes the adenylation of sulfate producing adenosine 5'-phosphosulfate (APS) and diphosphate, the first enzymatic step in sulfur assimilation pathway. APS synthesis involves the formation of a high-energy phosphoric-sulfuric acid anhydride bond driven by GTP hydrolysis by CysN coupled to ATP hydrolysis by CysD. The polypeptide is Sulfate adenylyltransferase subunit 1 (Salmonella arizonae (strain ATCC BAA-731 / CDC346-86 / RSK2980)).